The sequence spans 177 residues: Large ribosomal subunit protein uL6 (177 aa).

The protein belongs to the universal ribosomal protein uL6 family. As to quaternary structure, part of the 50S ribosomal subunit.

Its function is as follows. This protein binds to the 23S rRNA, and is important in its secondary structure. It is located near the subunit interface in the base of the L7/L12 stalk, and near the tRNA binding site of the peptidyltransferase center. This is Large ribosomal subunit protein uL6 from Edwardsiella ictaluri (strain 93-146).